The sequence spans 455 residues: 2-oxoisovalerate dehydrogenase subunit alpha, mitochondrial (455 aa).

A mitochondrion-targeting transit peptide spans 1 to 55; sequence MQGSAKMAMAVAVAVARVWRPSRGLGRTGLPLLRLLGARGLARFHPHRWQQQQHF. Thiamine diphosphate-binding residues include Tyr168 and Arg169. Ser216 is a K(+) binding site. Residue Ser217 participates in thiamine diphosphate binding. The K(+) site is built by Pro218, Thr221, and Gln222. Glu248 contributes to the Mg(2+) binding site. Thiamine diphosphate contacts are provided by Gly249, Ala250, and Arg275. The Mg(2+) site is built by Asn277 and Tyr279. His346 is a binding site for thiamine diphosphate. A Phosphoserine; by BCKDK modification is found at Ser347. Residue Thr348 is modified to Phosphothreonine. Ser349 and Ser357 each carry phosphoserine. Lys366 is modified (N6-acetyllysine; alternate). An N6-succinyllysine; alternate modification is found at Lys366. Lys390 carries the post-translational modification N6-succinyllysine.

The protein belongs to the BCKDHA family. In terms of assembly, heterotetramer of 2 alpha/BCKDHA and 2 beta chains/BCKDHB that forms the branched-chain alpha-keto acid decarboxylase (E1) component of the BCKD complex. The branched-chain alpha-ketoacid dehydrogenase is a large complex composed of three major building blocks E1, E2 and E3. It is organized around E2, a 24-meric cubic core composed of DBT, to which are associated 6 to 12 copies of E1, and approximately 6 copies of the dehydrogenase E3, a DLD dimer. Interacts with PPM1K. Thiamine diphosphate is required as a cofactor. Requires Mg(2+) as cofactor. In terms of processing, phosphorylated at Ser-347 by BCKDK and dephosphorylated by protein phosphatase PPM1K. Expressed in kidney (at protein level).

Its subcellular location is the mitochondrion matrix. It carries out the reaction N(6)-[(R)-lipoyl]-L-lysyl-[protein] + 3-methyl-2-oxobutanoate + H(+) = N(6)-[(R)-S(8)-2-methylpropanoyldihydrolipoyl]-L-lysyl-[protein] + CO2. Functionally, together with BCKDHB forms the heterotetrameric E1 subunit of the mitochondrial branched-chain alpha-ketoacid dehydrogenase (BCKD) complex. The BCKD complex catalyzes the multi-step oxidative decarboxylation of alpha-ketoacids derived from the branched-chain amino-acids valine, leucine and isoleucine producing CO2 and acyl-CoA which is subsequently utilized to produce energy. The E1 subunit catalyzes the first step with the decarboxylation of the alpha-ketoacid forming an enzyme-product intermediate. A reductive acylation mediated by the lipoylamide cofactor of E2 extracts the acyl group from the E1 active site for the next step of the reaction. This Bos taurus (Bovine) protein is 2-oxoisovalerate dehydrogenase subunit alpha, mitochondrial (BCKDHA).